A 187-amino-acid chain; its full sequence is Probable nicotinate-nucleotide adenylyltransferase (187 aa).

This sequence belongs to the NadD family.

The catalysed reaction is nicotinate beta-D-ribonucleotide + ATP + H(+) = deamido-NAD(+) + diphosphate. The protein operates within cofactor biosynthesis; NAD(+) biosynthesis; deamido-NAD(+) from nicotinate D-ribonucleotide: step 1/1. Functionally, catalyzes the reversible adenylation of nicotinate mononucleotide (NaMN) to nicotinic acid adenine dinucleotide (NaAD). The sequence is that of Probable nicotinate-nucleotide adenylyltransferase from Anaeromyxobacter sp. (strain K).